A 170-amino-acid polypeptide reads, in one-letter code: Small ribosomal subunit protein uS5 (170 aa).

Residues 16-79 (IEDQLVAINR…EAGKKNMISV (64 aa)) form the S5 DRBM domain.

The protein belongs to the universal ribosomal protein uS5 family. Part of the 30S ribosomal subunit. Contacts proteins S4 and S8.

Functionally, with S4 and S12 plays an important role in translational accuracy. In terms of biological role, located at the back of the 30S subunit body where it stabilizes the conformation of the head with respect to the body. The protein is Small ribosomal subunit protein uS5 of Lactobacillus delbrueckii subsp. bulgaricus (strain ATCC 11842 / DSM 20081 / BCRC 10696 / JCM 1002 / NBRC 13953 / NCIMB 11778 / NCTC 12712 / WDCM 00102 / Lb 14).